The following is a 184-amino-acid chain: Ribosome-recycling factor (184 aa).

This sequence belongs to the RRF family.

It localises to the cytoplasm. Its function is as follows. Responsible for the release of ribosomes from messenger RNA at the termination of protein biosynthesis. May increase the efficiency of translation by recycling ribosomes from one round of translation to another. This chain is Ribosome-recycling factor, found in Caldicellulosiruptor saccharolyticus (strain ATCC 43494 / DSM 8903 / Tp8T 6331).